Reading from the N-terminus, the 772-residue chain is uncharacterized protein (772 aa).

The next 2 helical transmembrane spans lie at 16–36 (LITF…LFSY) and 301–321 (IGWI…LFSW). The region spanning 670–768 (DNIIHIIHHE…GITPGNYRQQ (99 aa)) is the HTH araC/xylS-type domain. 2 DNA-binding regions (H-T-H motif) span residues 687–708 (DEIA…KKEM) and 735–758 (VKDI…KKLE).

The protein resides in the cell membrane. This is an uncharacterized protein from Bacillus subtilis (strain 168).